Reading from the N-terminus, the 295-residue chain is Pyridoxal 5'-phosphate synthase subunit PdxS (295 aa).

Aspartate 25 contacts D-ribose 5-phosphate. Lysine 82 (schiff-base intermediate with D-ribose 5-phosphate) is an active-site residue. Glycine 154 is a D-ribose 5-phosphate binding site. Arginine 166 serves as a coordination point for D-glyceraldehyde 3-phosphate. D-ribose 5-phosphate contacts are provided by residues glycine 215 and 236-237 (GS).

Belongs to the PdxS/SNZ family. In terms of assembly, in the presence of PdxT, forms a dodecamer of heterodimers.

It carries out the reaction aldehydo-D-ribose 5-phosphate + D-glyceraldehyde 3-phosphate + L-glutamine = pyridoxal 5'-phosphate + L-glutamate + phosphate + 3 H2O + H(+). It functions in the pathway cofactor biosynthesis; pyridoxal 5'-phosphate biosynthesis. Catalyzes the formation of pyridoxal 5'-phosphate from ribose 5-phosphate (RBP), glyceraldehyde 3-phosphate (G3P) and ammonia. The ammonia is provided by the PdxT subunit. Can also use ribulose 5-phosphate and dihydroxyacetone phosphate as substrates, resulting from enzyme-catalyzed isomerization of RBP and G3P, respectively. This is Pyridoxal 5'-phosphate synthase subunit PdxS from Bacillus cereus (strain B4264).